The chain runs to 182 residues: NADH-quinone oxidoreductase subunit I (182 aa).

4Fe-4S ferredoxin-type domains follow at residues 52–82 (LTRD…LQKA) and 92–121 (DFFR…LTPD). 8 residues coordinate [4Fe-4S] cluster: cysteine 62, cysteine 65, cysteine 68, cysteine 72, cysteine 101, cysteine 104, cysteine 107, and cysteine 111.

Belongs to the complex I 23 kDa subunit family. As to quaternary structure, NDH-1 is composed of 13 different subunits. Subunits NuoA, H, J, K, L, M, N constitute the membrane sector of the complex. It depends on [4Fe-4S] cluster as a cofactor.

The protein localises to the cell inner membrane. It catalyses the reaction a quinone + NADH + 5 H(+)(in) = a quinol + NAD(+) + 4 H(+)(out). Functionally, NDH-1 shuttles electrons from NADH, via FMN and iron-sulfur (Fe-S) centers, to quinones in the respiratory chain. The immediate electron acceptor for the enzyme in this species is believed to be ubiquinone. Couples the redox reaction to proton translocation (for every two electrons transferred, four hydrogen ions are translocated across the cytoplasmic membrane), and thus conserves the redox energy in a proton gradient. The sequence is that of NADH-quinone oxidoreductase subunit I from Pseudomonas savastanoi pv. phaseolicola (strain 1448A / Race 6) (Pseudomonas syringae pv. phaseolicola (strain 1448A / Race 6)).